A 504-amino-acid chain; its full sequence is Protein anon-37Cs (504 aa).

In terms of tissue distribution, low levels seen in adult heads, thorax, abdomen and ovaries, high levels in testes.

Its subcellular location is the cytoplasm. In terms of biological role, has a non-vital function. This is Protein anon-37Cs (anon-37Cs) from Drosophila melanogaster (Fruit fly).